The primary structure comprises 206 residues: Ribosomal RNA large subunit methyltransferase E (206 aa).

S-adenosyl-L-methionine contacts are provided by Gly-63, Trp-65, Asp-83, Asp-99, and Asp-124. The Proton acceptor role is filled by Lys-164.

Belongs to the class I-like SAM-binding methyltransferase superfamily. RNA methyltransferase RlmE family.

It is found in the cytoplasm. The enzyme catalyses uridine(2552) in 23S rRNA + S-adenosyl-L-methionine = 2'-O-methyluridine(2552) in 23S rRNA + S-adenosyl-L-homocysteine + H(+). In terms of biological role, specifically methylates the uridine in position 2552 of 23S rRNA at the 2'-O position of the ribose in the fully assembled 50S ribosomal subunit. This is Ribosomal RNA large subunit methyltransferase E from Buchnera aphidicola subsp. Schizaphis graminum (strain Sg).